Reading from the N-terminus, the 146-residue chain is Small ribosomal subunit protein bS6 (146 aa).

The tract at residues 100–146 (QSAMMRKRDDDDRGDRPDRGDRGRGPRPDRPPRRPRDDAAASDEGGF) is disordered. A compositionally biased stretch (basic and acidic residues) spans 105–138 (RKRDDDDRGDRPDRGDRGRGPRPDRPPRRPRDDA).

It belongs to the bacterial ribosomal protein bS6 family.

In terms of biological role, binds together with bS18 to 16S ribosomal RNA. The polypeptide is Small ribosomal subunit protein bS6 (Methylocella silvestris (strain DSM 15510 / CIP 108128 / LMG 27833 / NCIMB 13906 / BL2)).